Here is a 256-residue protein sequence, read N- to C-terminus: UPF0246 protein Maqu_2499 (256 aa).

Belongs to the UPF0246 family.

This is UPF0246 protein Maqu_2499 from Marinobacter nauticus (strain ATCC 700491 / DSM 11845 / VT8) (Marinobacter aquaeolei).